The chain runs to 734 residues: MALRFPRFSQGLAQDPTTRRIWFGIATAHDFESHDDITEERLYQNIFASHFGQLAIIFLWTSGNLFHVAWQGNFESWVQDPLHVRPIAHAIWDPHFGQPAVEAFTRGGALGPVNIAYSGVYQWWYTIGLRTNEDLYTGALFLLFLSAISLIAGWLHLQPKWKPSVSWFKNAESRLNHHLSGLFGVSSLAWTGHLVHVAIPASRGEYVRWNNFLDVLPHPQGLGPLFTGQWNLYAQNPDSSSHLFGTAQGAGTAILTLLGGFHPQTQSLWLTDIAHHHLAIAFIFLVAGHMYRTNFGIGHSMKDLLDAHIPPGGRLGRGHKGLYDTINNSLHFQLGLALASLGVITSLVAQHMYSLPAYAFIAQDFTTQAALYTHHQYIAGFIMTGAFAHGAIFFIRDYNPEQNEDNVLARMLEHKEAIISHLSWASLFLGFHTLGLYVHNDVMLAFGTPEKQILIEPIFAQWIQSAHGKTSYGFDVLLSSTSGPAFNAGRSIWLPGWLNAVNENSNSLFLTIGPGDFLVHHAIALGLHTTTLILVKGALDARGSKLMPDKKDFGYSFPCDGPGRGGTCDISAWDAFYLAVFWMLNTIGWVTFYWHWKHITLWQGNVSQFNESSTYLMGWLRDYLWLNSSQLINGYNPFGMNSLSVWAWMFLFGHLVWATGFMFLISWRGYWQELIETLAWAHERTPLANLIRWRDKPVALSIVQARLVGLAHFSVGYIFTYAAFLIASTSGKFG.

The next 8 helical transmembrane spans lie at 46–69, 135–158, 175–199, 273–291, 330–353, 369–395, 417–439, and 517–535; these read IFAS…FHVA, LYTG…LHLQ, LNHH…HVAI, IAHH…GHMY, LHFQ…QHMY, AALY…IFFI, AIIS…LYVH, and FLVH…LILV. Residues cysteine 559 and cysteine 568 each coordinate [4Fe-4S] cluster. A run of 2 helical transmembrane segments spans residues 575-596 and 643-665; these read AFYL…YWHW and LSVW…MFLI. Chlorophyll a-binding residues include histidine 654, methionine 662, and tyrosine 670. Tryptophan 671 lines the phylloquinone pocket. The helical transmembrane segment at 707-727 threads the bilayer; sequence LVGLAHFSVGYIFTYAAFLIA.

The protein belongs to the PsaA/PsaB family. The PsaA/B heterodimer binds the P700 chlorophyll special pair and subsequent electron acceptors. PSI consists of a core antenna complex that captures photons, and an electron transfer chain that converts photonic excitation into a charge separation. The eukaryotic PSI reaction center is composed of at least 11 subunits. P700 is a chlorophyll a/chlorophyll a' dimer, A0 is one or more chlorophyll a, A1 is one or both phylloquinones and FX is a shared 4Fe-4S iron-sulfur center. is required as a cofactor.

It is found in the plastid. The protein localises to the chloroplast thylakoid membrane. It catalyses the reaction reduced [plastocyanin] + hnu + oxidized [2Fe-2S]-[ferredoxin] = oxidized [plastocyanin] + reduced [2Fe-2S]-[ferredoxin]. Its function is as follows. PsaA and PsaB bind P700, the primary electron donor of photosystem I (PSI), as well as the electron acceptors A0, A1 and FX. PSI is a plastocyanin-ferredoxin oxidoreductase, converting photonic excitation into a charge separation, which transfers an electron from the donor P700 chlorophyll pair to the spectroscopically characterized acceptors A0, A1, FX, FA and FB in turn. Oxidized P700 is reduced on the lumenal side of the thylakoid membrane by plastocyanin. The protein is Photosystem I P700 chlorophyll a apoprotein A2 of Nicotiana tabacum (Common tobacco).